The following is a 364-amino-acid chain: tRNA/tmRNA (uracil-C(5))-methyltransferase (364 aa).

S-adenosyl-L-methionine-binding residues include Gln-188, Tyr-216, Asn-221, Glu-237, and Asp-297. Cys-322 functions as the Nucleophile in the catalytic mechanism. Glu-356 (proton acceptor) is an active-site residue.

It belongs to the class I-like SAM-binding methyltransferase superfamily. RNA M5U methyltransferase family. TrmA subfamily.

It carries out the reaction uridine(54) in tRNA + S-adenosyl-L-methionine = 5-methyluridine(54) in tRNA + S-adenosyl-L-homocysteine + H(+). It catalyses the reaction uridine(341) in tmRNA + S-adenosyl-L-methionine = 5-methyluridine(341) in tmRNA + S-adenosyl-L-homocysteine + H(+). Dual-specificity methyltransferase that catalyzes the formation of 5-methyluridine at position 54 (m5U54) in all tRNAs, and that of position 341 (m5U341) in tmRNA (transfer-mRNA). The protein is tRNA/tmRNA (uracil-C(5))-methyltransferase of Mannheimia succiniciproducens (strain KCTC 0769BP / MBEL55E).